Here is a 770-residue protein sequence, read N- to C-terminus: Coiled-coil alpha-helical rod protein 1 (770 aa).

3 coiled-coil regions span residues 56-289 (STVT…DLQA), 334-420 (LRNW…RQEQ), and 476-669 (GLMA…RKEE). Disordered regions lie at residues 573–592 (LEAA…SLRQ), 641–672 (LRQI…EGQR), 700–721 (NKKC…AASC), and 744–770 (SRDE…PLLS). The segment covering 648–672 (ATQEKERNQELRRLQDEARKEEGQR) has biased composition (basic and acidic residues). Positions 701-721 (KKCSPRSVESSSSESPAAASC) are enriched in low complexity.

It localises to the cytoplasm. Its subcellular location is the nucleus. Functionally, may be a regulator of keratinocyte proliferation or differentiation. This chain is Coiled-coil alpha-helical rod protein 1 (Cchcr1), found in Mus musculus (Mouse).